A 108-amino-acid polypeptide reads, in one-letter code: Thioredoxin Asp f 28 (108 aa).

One can recognise a Thioredoxin domain in the interval 1 to 108 (MSHGKVIAVD…LEEMIKSISA (108 aa)). Catalysis depends on nucleophile residues Cys-33 and Cys-36. Cys-33 and Cys-36 are oxidised to a cystine.

It belongs to the thioredoxin family.

Functionally, participates in various redox reactions through the reversible oxidation of its active center dithiol to a disulfide and catalyzes dithiol-disulfide exchange reactions. This is Thioredoxin Asp f 28 from Aspergillus fumigatus (Neosartorya fumigata).